A 154-amino-acid polypeptide reads, in one-letter code: Superoxide dismutase [Cu-Zn] (154 aa).

Residues His47, His49, and His64 each coordinate Cu cation. A disulfide bond links Cys58 and Cys147. The Zn(2+) site is built by His64, His72, His81, and Asp84. His121 lines the Cu cation pocket. The span at 125 to 137 shows a compositional bias: basic and acidic residues; the sequence is DDLGRSEHPESKK. The interval 125–144 is disordered; sequence DDLGRSEHPESKKTGNAGAR. Arg144 lines the substrate pocket.

The protein belongs to the Cu-Zn superoxide dismutase family. As to quaternary structure, homodimer. The cofactor is Cu cation. Zn(2+) is required as a cofactor.

It localises to the cytoplasm. It catalyses the reaction 2 superoxide + 2 H(+) = H2O2 + O2. Its function is as follows. Destroys radicals which are normally produced within the cells and which are toxic to biological systems. The protein is Superoxide dismutase [Cu-Zn] (sodC) of Aspergillus oryzae (strain ATCC 42149 / RIB 40) (Yellow koji mold).